Reading from the N-terminus, the 526-residue chain is MGSSKSKPKGPSQRRRSLEPPDSTHHGGFPASQTPNKTAAPDTHRTPSRSFGTVATEPKLFGDFNTSDTVTSPQRAGALAGGVTTFVALYDYESWIETDLSFKKGERLQIVNNTEGNWWLAHSVTTGQTGYIPSNYVAPSDSIQAEEWYFGKITRRESERLLLNPENPRGTFLVRESETTKGAYCLSVSDFDNAKGLNVKHYKIRKLDSGGFYITSRTQFSSLQQLVAYYSKHADGLCHRLTNVCPTSKPQTQGLAKDAWEIPRESLRLEVKLGQGCFGEVWMGTWNGTTRVAIKTLKPGTMSPEAFLQEAQVMKKLRHKKLVQLYAVVSEEPIYIVIEYMSKGSLLDFLKGEMGKYLRLPQLVDMAAQIASGMAYVERMNYVHRDLRAANILVGENLVCKVADFGLARLIEDNEYTARQGAKFPIKWTAPEAALYGRFTIKSDVWSFGILLTELTTKGRVPYPGMGNGEVLDRVERGYRMPCPPECPESLHDLMSQCWRRDPEERPTFEYLQAQLLPACVLEVAE.

Positions 1–15 (MGSSKSKPKGPSQRR) are enriched in basic residues. The segment at 1 to 59 (MGSSKSKPKGPSQRRRSLEPPDSTHHGGFPASQTPNKTAAPDTHRTPSRSFGTVATEPK) is disordered. Residue Gly-2 is the site of N-myristoyl glycine; by host attachment. Residues 16-25 (RSLEPPDSTH) are compositionally biased toward basic and acidic residues. An SH3 domain is found at 81–142 (GGVTTFVALY…PSNYVAPSDS (62 aa)). Residues 148–245 (WYFGKITRRE…GLCHRLTNVC (98 aa)) enclose the SH2 domain. Residues 267–517 (LRLEVKLGQG…TFEYLQAQLL (251 aa)) form the Protein kinase domain. Residues 273–281 (LGQGCFGEV) and Lys-295 contribute to the ATP site. The Proton acceptor role is filled by Asp-386. Tyr-416 carries the post-translational modification Phosphotyrosine; by autocatalysis.

It belongs to the protein kinase superfamily. Tyr protein kinase family. SRC subfamily. In terms of assembly, homodimer. The phosphorylated form is termed pp60v-src.

The enzyme catalyses L-tyrosyl-[protein] + ATP = O-phospho-L-tyrosyl-[protein] + ADP + H(+). Functionally, this phosphoprotein, required for both the initiation and the maintenance of neoplastic transformation, is a protein kinase that catalyzes the phosphorylation of tyrosine residues in vitro. This Rous sarcoma virus subgroup E (strain Schmidt-Ruppin) (RSV-SR-E) protein is Tyrosine-protein kinase transforming protein Src (V-SRC).